A 589-amino-acid polypeptide reads, in one-letter code: Phenylalanine--tRNA ligase beta subunit (589 aa).

One can recognise a B5 domain in the interval 302–379 (LAYRKEMVRA…IAYGYSNIQM (78 aa)). Mg(2+) is bound by residues Asp-357, Asp-363, Glu-366, and Asp-367.

It belongs to the phenylalanyl-tRNA synthetase beta subunit family. Type 2 subfamily. In terms of assembly, heterotetramer; dimer of two heterodimers formed by FARSA and FARSB. Requires Mg(2+) as cofactor.

The protein resides in the cytoplasm. The catalysed reaction is tRNA(Phe) + L-phenylalanine + ATP = L-phenylalanyl-tRNA(Phe) + AMP + diphosphate + H(+). In Pongo abelii (Sumatran orangutan), this protein is Phenylalanine--tRNA ligase beta subunit (FARSB).